The chain runs to 377 residues: Bacterial actin-related protein (377 aa).

It belongs to the actin family.

In terms of biological role, may be a dominant-negative inhibitor of eukaryotic actin polymerization. This is Bacterial actin-related protein (barP) from Haliangium ochraceum (strain DSM 14365 / JCM 11303 / SMP-2).